Consider the following 765-residue polypeptide: MASHIVGYPRMGPKRELKFALESFWDKKSSAEDLQKVAADLRSSIWKQMADAGIKYIPSNTFSYYDQVLDTATMLGAVPPRYNFAGGEIGFDTYFSMARGNASVPAMEMTKWFDTNYHYIVPELGPEVNFSYASHKAVNEYKEAKELGVDTVPVLVGPVTFLLLSKPAKGVEKTFPLLSLLDKILPVYKEVIGELKAAGASWIQFDEPTLVLDLESHQLEAFTKAYSELESTLSGLNVIVETYFADIPAETYKILTALKGVTGFGFDLVRGAKTLDLIKGGFPSGKYLFAGVVDGRNIWANDLAASLSTLQSLEGIVGKDKLVVSTSCSLLHTAVDLVNEPKLDKEIKSWLAFAAQKVVEVNALAKALAGEKDEAFFSENAAAQASRKSSPRVTNQAVQKAAAALRGSDHRRATTVSARLDAQQKKLNLPVLPTTTIGSFPQTLELRRVRREYKAKKISEDDYVKAIKEEISKVVKLQEELDIDVLVHGEPERNDMVEYFGEQLSGFAFTANGWVQSYGSRCVKPPIIYGDVSRPNPMTVFWSQTAQSMTKRPMKGMLTGPVTILNWSFVRNDQPRFETCYQIALAIKDEVEDLEKAGINVIQIDEAALREGLPLRKAEHAFYLDWAVHSFRITNLPLQDTTQIHTHMCYSNFNDIIHSIIDMDADVMTIENSRSSEKLLSVFREGVKYGAGIGPGVYDIHSPRIPSTEEIADRINKMLAVLDTNILWVNPDCGLKTRKYAEVKPALENMVSAAKLIRTQLASAK.

The 5-methyltetrahydropteroyltri-L-glutamate site is built by Lys-18 and Asn-116. Residues 437-439 (IGS) and Glu-490 contribute to the L-homocysteine site. Residues 437–439 (IGS) and Glu-490 each bind L-methionine. Residues Asp-495, Tyr-518, 521–522 (RC), and Trp-567 each bind 5-methyltetrahydropteroyltri-L-glutamate. Asp-605 contacts L-homocysteine. Asp-605 is a binding site for L-methionine. His-647, Cys-649, His-658, Asp-662, and Glu-671 together coordinate Zn(2+). His-701 acts as the Proton donor in catalysis. Cys-733 lines the Zn(2+) pocket.

This sequence belongs to the vitamin-B12 independent methionine synthase family. Zn(2+) is required as a cofactor.

Its subcellular location is the cytoplasm. The catalysed reaction is 5-methyltetrahydropteroyltri-L-glutamate + L-homocysteine = tetrahydropteroyltri-L-glutamate + L-methionine. The protein operates within amino-acid biosynthesis; L-methionine biosynthesis via de novo pathway; L-methionine from L-homocysteine (MetE route): step 1/1. In terms of biological role, catalyzes the transfer of a methyl group from 5-methyltetrahydrofolate to homocysteine resulting in methionine formation. In Catharanthus roseus (Madagascar periwinkle), this protein is 5-methyltetrahydropteroyltriglutamate--homocysteine methyltransferase (METE).